The chain runs to 163 residues: MSNINLATLDISEHPNLPSSSAVLFEAKAKKKLSFEAIASAIGRNEVATAAIFYGQAKASAEDIVKLSEVLGIDRFYLESLLSGFPDRGKSVTFPPKDPLIYRLFEIVQNYGYAYKAVMNEKFGDGIMSAISFSTTVEKETDLDGNNWAVVTWRGKWLPYSRF.

Active-site residues include Arg-103, Glu-106, and Ser-129.

This sequence belongs to the cyanase family.

It catalyses the reaction cyanate + hydrogencarbonate + 3 H(+) = NH4(+) + 2 CO2. Catalyzes the reaction of cyanate with bicarbonate to produce ammonia and carbon dioxide. The polypeptide is Cyanate hydratase (Paracoccidioides lutzii (strain ATCC MYA-826 / Pb01) (Paracoccidioides brasiliensis)).